A 285-amino-acid polypeptide reads, in one-letter code: MKVTVGPDPSLVYRPDVDPEMAKDKASFRNYTSGPLLDRVFTTYKLMHTHQTVDFVRSKHAQFGGFSYKKMTVMEAVDLLDGLVDESDPDVDFPNSFHAFQTAEGIRKAHPDKDWFHLVGLLHDLGKVLALFGEPQWAVVGDTFPVGCRPQASVVFCDSTFQDNPDLQDPRYSTELGMYQPHCGLDRVLMSWGHDEYMYQVMKFNKFSLPPEAFYMIRFHSFYPWHTGSDYQQLCSQQDLAMLPWVQEFNKFDLYTKCPDLPDVDKLRPYYQGLIDKYCPGILSW.

Substrate is bound at residue Arg29. At Ser33 the chain carries Phosphoserine. 85 to 87 (DES) lines the substrate pocket. Fe cation is bound by residues His98, His123, and Asp124. Residues Lys127 and 141-142 (GD) each bind substrate. Positions 194, 220, and 253 each coordinate Fe cation. 220–221 (HS) contributes to the substrate binding site.

It belongs to the myo-inositol oxygenase family. Fe cation is required as a cofactor.

Its subcellular location is the cytoplasm. The catalysed reaction is myo-inositol + O2 = D-glucuronate + H2O + H(+). The protein operates within polyol metabolism; myo-inositol degradation into D-glucuronate; D-glucuronate from myo-inositol: step 1/1. The protein is Inositol oxygenase (MIOX) of Pongo abelii (Sumatran orangutan).